The primary structure comprises 184 residues: ATP synthase subunit b, chloroplastic (184 aa).

The helical transmembrane segment at Ile29–Leu49 threads the bilayer.

It belongs to the ATPase B chain family. As to quaternary structure, F-type ATPases have 2 components, F(1) - the catalytic core - and F(0) - the membrane proton channel. F(1) has five subunits: alpha(3), beta(3), gamma(1), delta(1), epsilon(1). F(0) has four main subunits: a(1), b(1), b'(1) and c(10-14). The alpha and beta chains form an alternating ring which encloses part of the gamma chain. F(1) is attached to F(0) by a central stalk formed by the gamma and epsilon chains, while a peripheral stalk is formed by the delta, b and b' chains.

It is found in the plastid. The protein resides in the chloroplast thylakoid membrane. Functionally, f(1)F(0) ATP synthase produces ATP from ADP in the presence of a proton or sodium gradient. F-type ATPases consist of two structural domains, F(1) containing the extramembraneous catalytic core and F(0) containing the membrane proton channel, linked together by a central stalk and a peripheral stalk. During catalysis, ATP synthesis in the catalytic domain of F(1) is coupled via a rotary mechanism of the central stalk subunits to proton translocation. In terms of biological role, component of the F(0) channel, it forms part of the peripheral stalk, linking F(1) to F(0). The protein is ATP synthase subunit b, chloroplastic of Adiantum capillus-veneris (Maidenhair fern).